The chain runs to 65 residues: UPF0434 protein VFMJ11_A0475 (65 aa).

It belongs to the UPF0434 family.

The chain is UPF0434 protein VFMJ11_A0475 from Aliivibrio fischeri (strain MJ11) (Vibrio fischeri).